We begin with the raw amino-acid sequence, 1216 residues long: AF4/FMR2 family member 1 (1216 aa).

Disordered regions lie at residues Met1–Glu52, Lys68–Ser104, Ile116–Arg139, Pro152–Lys217, Ala244–Lys275, and Ser352–Gly728. Composition is skewed to basic and acidic residues over residues Asn9–Pro35 and His78–Gly99. A compositionally biased stretch (basic and acidic residues) spans Arg166 to Leu182. Ser183, Ser191, and Ser197 each carry phosphoserine. Over residues Ser207 to Lys217 the composition is skewed to low complexity. The segment covering Pro252–Pro266 has biased composition (pro residues). Polar residues predominate over residues Pro383–Ser406. The span at Leu408–Gln424 shows a compositional bias: acidic residues. The segment covering Pro429–Ala438 has biased composition (pro residues). Positions Glu457–Pro484 are enriched in acidic residues. Lys682 is modified (N6-acetyllysine). Residues Ser710–Gly728 show a composition bias toward low complexity. Phosphoserine occurs at positions 755 and 760. Disordered regions lie at residues Arg777–Ala969 and Ala1094–Ala1125. Positions Arg789–Ser808 are enriched in basic and acidic residues. Composition is skewed to low complexity over residues Lys824–Thr846, Pro867–Pro886, Pro902–Asp915, and Pro1115–Ala1125.

The protein belongs to the AF4 family. In terms of assembly, component of the super elongation complex (SEC), at least composed of EAF1, EAF2, CDK9, MLLT3/AF9, AFF (AFF1 or AFF4), the P-TEFb complex and ELL (ELL, ELL2 or ELL3).

The protein localises to the nucleus. In Mus musculus (Mouse), this protein is AF4/FMR2 family member 1 (Aff1).